The sequence spans 306 residues: NAD kinase 1 (306 aa).

Catalysis depends on aspartate 67, which acts as the Proton acceptor. Residues 67-68 (DG), 149-150 (NE), aspartate 181, and 192-197 (TGYTVS) each bind NAD(+).

The protein belongs to the NAD kinase family. Requires a divalent metal cation as cofactor.

The protein resides in the cytoplasm. It catalyses the reaction NAD(+) + ATP = ADP + NADP(+) + H(+). Involved in the regulation of the intracellular balance of NAD and NADP, and is a key enzyme in the biosynthesis of NADP. Catalyzes specifically the phosphorylation on 2'-hydroxyl of the adenosine moiety of NAD to yield NADP. This chain is NAD kinase 1, found in Trichormus variabilis (strain ATCC 29413 / PCC 7937) (Anabaena variabilis).